Here is a 447-residue protein sequence, read N- to C-terminus: Cytochrome P450 BJ-4 homolog (447 aa).

Residue Cys392 coordinates heme.

It belongs to the cytochrome P450 family. Heme is required as a cofactor.

Functionally, cytochromes P450 are a group of heme-thiolate monooxygenases. They oxidize a variety of structurally unrelated compounds, including steroids, fatty acids, and xenobiotics. This is Cytochrome P450 BJ-4 homolog (cyp117A2) from Sinorhizobium fredii (strain NBRC 101917 / NGR234).